We begin with the raw amino-acid sequence, 119 residues long: Large ribosomal subunit protein bL20 (119 aa).

The protein belongs to the bacterial ribosomal protein bL20 family.

In terms of biological role, binds directly to 23S ribosomal RNA and is necessary for the in vitro assembly process of the 50S ribosomal subunit. It is not involved in the protein synthesizing functions of that subunit. This is Large ribosomal subunit protein bL20 from Azoarcus sp. (strain BH72).